A 346-amino-acid chain; its full sequence is Centromere protein L (346 aa).

A Phosphoserine modification is found at Ser41. Thr45 is modified (phosphothreonine). Phosphoserine is present on Ser55.

The protein belongs to the CENP-L/IML3 family. Component of the CENPA-CAD complex, composed of CENPI, CENPK, CENPL, CENPO, CENPP, CENPQ, CENPR and CENPS. The CENPA-CAD complex interacts with the CENPA-NAC complex, at least composed of CENPA, CENPC, CENPH, CENPM, CENPN, CENPT and CENPU.

The protein resides in the nucleus. The protein localises to the chromosome. Its subcellular location is the centromere. Functionally, component of the CENPA-CAD (nucleosome distal) complex, a complex recruited to centromeres which is involved in assembly of kinetochore proteins, mitotic progression and chromosome segregation. May be involved in incorporation of newly synthesized CENPA into centromeres via its interaction with the CENPA-NAC complex. The protein is Centromere protein L (CENPL) of Bos taurus (Bovine).